The following is an 88-amino-acid chain: Large ribosomal subunit protein eL34 (88 aa).

The protein belongs to the eukaryotic ribosomal protein eL34 family.

This Saccharolobus solfataricus (strain ATCC 35092 / DSM 1617 / JCM 11322 / P2) (Sulfolobus solfataricus) protein is Large ribosomal subunit protein eL34.